The following is a 203-amino-acid chain: ATP-dependent Clp protease proteolytic subunit 1 (203 aa).

The Nucleophile role is filled by S102. The active site involves H127.

The protein belongs to the peptidase S14 family. In terms of assembly, fourteen ClpP subunits assemble into 2 heptameric rings which stack back to back to give a disk-like structure with a central cavity, resembling the structure of eukaryotic proteasomes.

It is found in the cytoplasm. It catalyses the reaction Hydrolysis of proteins to small peptides in the presence of ATP and magnesium. alpha-casein is the usual test substrate. In the absence of ATP, only oligopeptides shorter than five residues are hydrolyzed (such as succinyl-Leu-Tyr-|-NHMec, and Leu-Tyr-Leu-|-Tyr-Trp, in which cleavage of the -Tyr-|-Leu- and -Tyr-|-Trp bonds also occurs).. Functionally, cleaves peptides in various proteins in a process that requires ATP hydrolysis. Has a chymotrypsin-like activity. Plays a major role in the degradation of misfolded proteins. The chain is ATP-dependent Clp protease proteolytic subunit 1 from Rhizobium johnstonii (strain DSM 114642 / LMG 32736 / 3841) (Rhizobium leguminosarum bv. viciae).